Reading from the N-terminus, the 396-residue chain is Elongation factor Tu (396 aa).

The region spanning 10-205 is the tr-type G domain; it reads KPHVNVGTIG…AVDEYIPTPE (196 aa). A G1 region spans residues 19 to 26; sequence GHVDHGKT. Residue 19–26 participates in GTP binding; sequence GHVDHGKT. A Mg(2+)-binding site is contributed by Thr-26. The segment at 61–65 is G2; that stretch reads GITIA. The G3 stretch occupies residues 82 to 85; the sequence is DCPG. Residues 82–86 and 137–140 each bind GTP; these read DCPGH and NKTD. Positions 137–140 are G4; sequence NKTD. The interval 175-177 is G5; that stretch reads SAL.

It belongs to the TRAFAC class translation factor GTPase superfamily. Classic translation factor GTPase family. EF-Tu/EF-1A subfamily. In terms of assembly, monomer.

It localises to the cytoplasm. The catalysed reaction is GTP + H2O = GDP + phosphate + H(+). GTP hydrolase that promotes the GTP-dependent binding of aminoacyl-tRNA to the A-site of ribosomes during protein biosynthesis. The polypeptide is Elongation factor Tu (Salinibacter ruber (strain DSM 13855 / M31)).